The chain runs to 444 residues: MNRYKIGLISLGCDKNRIDSELLLGKLNEKNDIVNDPNKADIIIVNTCGFIESSKQESIDTILEMAKYKEENCKMIIATGCLTQRYSKELLELIPEIDIMLGVNDYANIQNYIDDFFNEHNKICQCKYSDISINEGKRILTTAKHMAYIRISEGCNNLCTYCIIPKIRGKYRSRSIESIINEAKELANMGVKELILVGQDTAIYGSDLYKENRLSQLLRELSNIEDIEWIRILYTYPEEITDELIEEIKNNDKVCKYLDIPIQHISNTVLKRMNRKSSKELITDNIKKMRKEIDGLCLRTSIIVGFPGETEDEFNELKEFVEEIKFDNLGVFKYSQEEDTAAARMKDQVSEDLKEERLATIMSIQQNVSSKINKNKLEKVYKVLVEGQNDKYYIGRNYQMVPEIDGAIFFKCDKILNVGEFVYVKITDTLEYDLIGVVCDESGQ.

The 115-residue stretch at tyrosine 4–asparagine 118 folds into the MTTase N-terminal domain. Residues cysteine 13, cysteine 48, cysteine 81, cysteine 155, cysteine 159, and cysteine 162 each coordinate [4Fe-4S] cluster. A Radical SAM core domain is found at threonine 141 to lysine 371. The region spanning lysine 374–aspartate 440 is the TRAM domain.

It belongs to the methylthiotransferase family. RimO subfamily. Requires [4Fe-4S] cluster as cofactor.

The protein localises to the cytoplasm. It catalyses the reaction L-aspartate(89)-[ribosomal protein uS12]-hydrogen + (sulfur carrier)-SH + AH2 + 2 S-adenosyl-L-methionine = 3-methylsulfanyl-L-aspartate(89)-[ribosomal protein uS12]-hydrogen + (sulfur carrier)-H + 5'-deoxyadenosine + L-methionine + A + S-adenosyl-L-homocysteine + 2 H(+). Its function is as follows. Catalyzes the methylthiolation of an aspartic acid residue of ribosomal protein uS12. The sequence is that of Ribosomal protein uS12 methylthiotransferase RimO from Clostridium novyi (strain NT).